Reading from the N-terminus, the 285-residue chain is HTH-type transcriptional regulator MurR (285 aa).

The region spanning 1 to 77 (MLYLTKISNA…MALIGEYSAS (77 aa)) is the HTH rpiR-type domain. Residues 37–56 (SRQMAKQLGISQSSIVKFAQ) constitute a DNA-binding region (H-T-H motif). Positions 128–279 (IIEVISKAPF…SLKMIQRSSE (152 aa)) constitute an SIS domain.

In terms of assembly, homotetramer.

It participates in amino-sugar metabolism; N-acetylmuramate degradation [regulation]. Functionally, represses the expression of the murPQ operon involved in the uptake and degradation of N-acetylmuramic acid (MurNAc). Binds to two adjacent inverted repeats within the operator region. MurNAc 6-phosphate, the substrate of MurQ, is the specific inducer that weakens binding of MurR to the operator. The polypeptide is HTH-type transcriptional regulator MurR (Shigella boydii serotype 4 (strain Sb227)).